The primary structure comprises 215 residues: Adenylate kinase (215 aa).

Position 10–15 (10–15 (GCGKGT)) interacts with ATP. Residues 30–59 (STGDIFRQTIDQKGPYWEELKSYISKGLLV) are NMP. Residues Thr31, Arg36, 57-59 (LLV), and Gln91 each bind AMP. The segment at 120 to 157 (GRRICSKCKRIYNIHYSAPKKEDICDDDGEFLIQRKDD) is LID. Arg121 contacts ATP. Zn(2+)-binding residues include Cys124 and Cys127. An ATP-binding site is contributed by 130 to 131 (IY). Zn(2+) contacts are provided by Cys144 and Asp147. AMP-binding residues include Arg154 and Arg165.

It belongs to the adenylate kinase family. As to quaternary structure, monomer.

Its subcellular location is the cytoplasm. It carries out the reaction AMP + ATP = 2 ADP. It participates in purine metabolism; AMP biosynthesis via salvage pathway; AMP from ADP: step 1/1. In terms of biological role, catalyzes the reversible transfer of the terminal phosphate group between ATP and AMP. Plays an important role in cellular energy homeostasis and in adenine nucleotide metabolism. This is Adenylate kinase from Malacoplasma penetrans (strain HF-2) (Mycoplasma penetrans).